Consider the following 498-residue polypeptide: Glycylpeptide N-tetradecanoyltransferase 2 (498 aa).

A disordered region spans residues 1-87; sequence MAEDSESAAS…QPPSKNSTIP (87 aa). Acidic residues predominate over residues 15–32; it reads ELDDQDTCGIDGDNEEET. At S38 the chain carries Phosphoserine. Over residues 46–57 the composition is skewed to basic residues; the sequence is KKKKKKQKRKKE. Residues 61–72 are compositionally biased toward polar residues; the sequence is SGGTKSDSASDS. The tetradecanoyl-CoA site is built by H117, W122, L250, V252, S258, R260, V261, and A262.

It belongs to the NMT family.

Its subcellular location is the cytoplasm. The protein localises to the membrane. The enzyme catalyses N-terminal glycyl-[protein] + tetradecanoyl-CoA = N-tetradecanoylglycyl-[protein] + CoA + H(+). The catalysed reaction is N-terminal glycyl-L-lysyl-[protein] + tetradecanoyl-CoA = N-terminal glycyl-(N(6)-tetradecanoyl)-L-lysyl-[protein] + CoA + H(+). In terms of biological role, adds a myristoyl group to the N-terminal glycine residue of certain cellular and viral proteins. Also able to mediate N-terminal lysine myristoylation of proteins: catalyzes myristoylation of ARF6 on both 'Gly-2' and 'Lys-3'. Lysine myristoylation is required to maintain ARF6 on membranes during the GTPase cycle. The polypeptide is Glycylpeptide N-tetradecanoyltransferase 2 (NMT2) (Bos taurus (Bovine)).